The sequence spans 349 residues: uncharacterized protein (349 aa).

Phosphoserine is present on Ser2.

This is an uncharacterized protein from Saccharomyces cerevisiae (strain ATCC 204508 / S288c) (Baker's yeast).